A 412-amino-acid chain; its full sequence is Multifunctional CCA protein (412 aa).

Positions 8 and 11 each coordinate ATP. Residues Gly8 and Arg11 each contribute to the CTP site. The Mg(2+) site is built by Asp21 and Asp23. ATP contacts are provided by Arg91, Arg137, and Arg140. CTP is bound by residues Arg91, Arg137, and Arg140. Positions 228-329 constitute an HD domain; it reads TGIHTLMTLS…VKLFDSIDAW (102 aa).

It belongs to the tRNA nucleotidyltransferase/poly(A) polymerase family. Bacterial CCA-adding enzyme type 1 subfamily. In terms of assembly, monomer. Can also form homodimers and oligomers. Mg(2+) serves as cofactor. Ni(2+) is required as a cofactor.

The enzyme catalyses a tRNA precursor + 2 CTP + ATP = a tRNA with a 3' CCA end + 3 diphosphate. The catalysed reaction is a tRNA with a 3' CCA end + 2 CTP + ATP = a tRNA with a 3' CCACCA end + 3 diphosphate. Functionally, catalyzes the addition and repair of the essential 3'-terminal CCA sequence in tRNAs without using a nucleic acid template. Adds these three nucleotides in the order of C, C, and A to the tRNA nucleotide-73, using CTP and ATP as substrates and producing inorganic pyrophosphate. tRNA 3'-terminal CCA addition is required both for tRNA processing and repair. Also involved in tRNA surveillance by mediating tandem CCA addition to generate a CCACCA at the 3' terminus of unstable tRNAs. While stable tRNAs receive only 3'-terminal CCA, unstable tRNAs are marked with CCACCA and rapidly degraded. The protein is Multifunctional CCA protein of Escherichia coli (strain SE11).